Here is a 366-residue protein sequence, read N- to C-terminus: Terpene cyclase atmA (366 aa).

A run of 8 helical transmembrane segments spans residues 9 to 29 (FLLL…NNGF), 84 to 104 (LTGL…VVHI), 113 to 133 (GMVI…GIVI), 162 to 182 (GLVV…SLPA), 195 to 215 (IAAW…HHLF), 233 to 253 (VYHF…SAFV), 291 to 311 (AGLF…TMVW), and 333 to 353 (ILRL…VRLI).

The protein belongs to the membrane-bound ascI terpene cyclase family.

It is found in the membrane. Its function is as follows. Aflatrem synthesis protein A; part of the ATM2 gene cluster that mediates the biosynthesis of aflatrem, a tremorgenic mycotoxin with acute neurotoxic effects. Synthesis of geranylgeranyl diphosphate (GGPP) by AtmG (a GGPP synthase) precedes condensation of GGPP with indole 3-glycerol phosphate, followed by epoxidation and cyclization by AtmM (a FAD-dependent monooxygenase) and AtmC (a prenyltransferase) to produce paspaline. AtmB is also essential for paspaline production, but its exact role has not been identified yet. AtmP, a cytochrome P450 monooxygenase, subsequently converts paspaline to 13-desoxypaxilline via PC-M6 by removal of the C-30 methyl group and oxidation at C-10. AtmQ, a cytochrome P450 monooxygenase, then catalyzes the oxidation of 13-desoxypaxilline, first at C-7 to produce paspalicine and then at C-13 to form paspalinine. Finally, AtmD prenylates paspalinine to form aflatrem. The role of atmA in the aflatrem biosynthesis is still unknown. This is Terpene cyclase atmA from Aspergillus flavus.